The following is a 152-amino-acid chain: MQKNNHNEEIEKEFEEVIVNIGRVTKVVKGGRRFRFTALVVIGDRKGTVGYGFGKAKEVPDAIKKAVDDAHKNLVKVNIKGTTIAHDIEHKFNASRIVLRPASEGTGVIAGGAARPVLELAGIQDVLSKSIGSNNPNNLVRATIQALTRIKA.

One can recognise an S5 DRBM domain in the interval 14-77; sequence FEEVIVNIGR…DDAHKNLVKV (64 aa).

This sequence belongs to the universal ribosomal protein uS5 family. In terms of assembly, part of the 30S ribosomal subunit. Contacts proteins S4 and S8.

With S4 and S12 plays an important role in translational accuracy. Functionally, located at the back of the 30S subunit body where it stabilizes the conformation of the head with respect to the body. In Sulfurovum sp. (strain NBC37-1), this protein is Small ribosomal subunit protein uS5.